The primary structure comprises 779 residues: MEMDVTRDTVEVLPQHKFDIRSLEAYLNQHLPGFGSDHRAVLTVTQYRSGQSNPTFFLQKGSQAYVLRKKPPGSLLPKAHKIDREFKVQKALFSVGFPVPKPLLYCSNASIIGTEFYVMEHVQGRIFRDFSIPGVSPAERAAIYVSLVETLAWLHSLDIHSLGLDRYGTGVGYCKRQVSTWTKQYQASAHQSIPAMDQLSTWLMRNLPDSDNEECLVHGDFKLDNIVFHPKECRVIAVLDWELSTFGHPLSDLAHLSLFYFWPRTLPMINRGSHIQENTGIPLMEELISIYCRRRGIDPNLPNWNFFMALSFFKLAGIAQGVYSRYLMGNNSSEDSFLTANTVQPLAETGLQLSRRTLSTVPPQADAKSRLFAQSRRGQEVLTRVKQFMKQHVFPAEKEVAEYYAQNGNSAEKWEHPLVIEKLKEMAKAEGLWNLFLPAVSGLSQVDYALIAEETGKCFFAPDVFNCQAPDTGNMEVLHLYGSEQQKQQWLEPLLRGDITSVFCMTEPNVSSSDATNMECSIQRDGGSYIVHGKKWWSSGAGNPKCKIAVVLGRTESPSVSRHKVHSMILVPMDTPGVELIRPLSVFGYMDNVHGGHWEVHFNHVRVPASNLILGEGRGFEISQGRLGPGRIHHCMRSVGLAERILQIMCDRAVQREAFGKKLYEHEVVAHWIAKSRIAIEEIRLLTLKAAHSIDTLGSAAARKEIAMIKVAAPKAVCKIADRAIQVHGGAGVSQDYPLANMYAIIRTLRLADGPDEVHLSAIAKMELQDQARQLKARM.

Lysine 175 bears the N6-acetyllysine mark. Serine 210 is subject to Phosphoserine. Tyrosine 323 carries the phosphotyrosine modification. N6-succinyllysine occurs at positions 368 and 390. Residues 503-513 (FCMTEPNVSSS), 511-513 (SSS), 537-539 (WSS), and serine 539 each bind FAD. Serine 513 is a substrate binding site. Residue 628-631 (GPGR) participates in substrate binding. Residues arginine 656, glutamine 726, and 726–730 (QVHGG) contribute to the FAD site. Residue glycine 754 participates in substrate binding. Residues 755 to 757 (PDE) and glutamate 757 each bind FAD. The residue at position 765 (lysine 765) is an N6-acetyllysine.

It belongs to the acyl-CoA dehydrogenase family. Homodimer. The cofactor is FAD.

It is found in the peroxisome. The protein localises to the mitochondrion membrane. The enzyme catalyses a 2,3-saturated acyl-CoA + oxidized [electron-transfer flavoprotein] + H(+) = a (2E)-enoyl-CoA + reduced [electron-transfer flavoprotein]. The catalysed reaction is docosanoyl-CoA + oxidized [electron-transfer flavoprotein] + H(+) = (2E)-docosenoyl-CoA + reduced [electron-transfer flavoprotein]. It catalyses the reaction tetracosanoyl-CoA + oxidized [electron-transfer flavoprotein] + H(+) = (2E)-tetracosenoyl-CoA + reduced [electron-transfer flavoprotein]. It carries out the reaction eicosanoyl-CoA + oxidized [electron-transfer flavoprotein] + H(+) = (2E)-eicosenoyl-CoA + reduced [electron-transfer flavoprotein]. The enzyme catalyses hexacosanoyl-CoA + oxidized [electron-transfer flavoprotein] + H(+) = (2E)-hexacosenoyl-CoA + reduced [electron-transfer flavoprotein]. The catalysed reaction is tricosanoyl-CoA + oxidized [electron-transfer flavoprotein] + H(+) = (2E)-tricosenoyl-CoA + reduced [electron-transfer flavoprotein]. It functions in the pathway lipid metabolism; fatty acid beta-oxidation. Functionally, acyl-CoA dehydrogenase, that exhibits maximal activity towards saturated C22-CoA. Probably participates in beta-oxydation and energy production but could also play a role in the metabolism of specific fatty acids to control fatty acids composition of cellular lipids in brain. In Rattus norvegicus (Rat), this protein is Acyl-CoA dehydrogenase family member 11 (Acad11).